Here is a 1142-residue protein sequence, read N- to C-terminus: MSHAPRYAELRCKSCFSFLEGASHPEELVGRAAELGLSALALADVNGLYGIVRAHAEAKRQGLPLIVGAELVVAGLAPGRPARLVLLAQDREGYAGLCRLVTRAHCGEGWTGAPERRERDAVAVPFEAVAAGARGLFALYPGADGDAVARLKDAFGRRAALAVTRHRVAGEEARVLAARSAGRRLGVPVAVTNDVHTHARARQVLQDVLTCVRHGTTVDRAGRRLFPNAERTLKGPEELARLWSDFPEGLAAAADIADQCRFRMEEIRGEHPLPPVVVERGALAGGVEVATSSPAQAAREGARTATPSLSLRASLPAERPAAPEPEGPAASAPEGPASSEPGEPGLAGAGGGTGAAAGTDRDGALAGMSLLRELVREGARWRYGGEPPEDVARQLARELDLVESLGYASYFLTVWDVVRFARSRGILCQGRGSAANSAVCYVLGITSIDPVRMGLLFERFISAERGEPPDIDVDFEHERREEVLQYVYQRYGRDRAGMVCEVITYRGKSALRDVGKALGLSLGQVDRLAKLIGTYEDLGQVGPELLAQAGLDAADSERVRMTLALARELQGFPRHLSIHVGGFVITRRPLCETVPIEPAAMPGRTIVQWDKDDLSELDLLKVDLLGLGMLTALSRALALLARHRPAPASPTAVPHPDALATIPAEDPEVYEMLGRADSIGVFQVESRAQMSLAPRLRPRNFYDLVISVAIIRPGPIQGGMIHPYLRRRDGKEQVRYPYAPLEPVLARTLGVPLFQEQAMRLAVIAAGFTPGEADELRRVMTHRRSHEKLAAMKARLVAGMAERGISGADAEEIFKQLLGFAGYGFPESHAASFALLVYASAWLKRYHPAAFACALLNSQPMGFYAPHTLVEDAKRHGVEVRGVDVGCSGWESSLEGAAPGRPAAPGETAVLRVGLHAVRGLPRAVGEAILEARAAGPFGSVAELVRRARLSRAWLVRLAEAGALGALAPDRRDAVWRSLAVEADGGDLFAGLAPPEPEVALPAASAADEVSADFATTGLSVRGHPMALVRPGLGGDRIRTARELGRLPDRAPVEVAGLVIVRQRPETARGIVFVSLEDETGIANLVVMPDVYERFRPVVRGAPFLLARGRVERSGKVVNVRVDSVAPLALAPSMGARARDFH.

Positions 291–361 (TSSPAQAARE…GTGAAAGTDR (71 aa)) are disordered. Composition is skewed to low complexity over residues 311–320 (LRASLPAERP) and 327–344 (GPAA…PGEP). Residues 345–355 (GLAGAGGGTGA) show a composition bias toward gly residues.

It belongs to the DNA polymerase type-C family. DnaE2 subfamily.

The protein localises to the cytoplasm. The enzyme catalyses DNA(n) + a 2'-deoxyribonucleoside 5'-triphosphate = DNA(n+1) + diphosphate. Functionally, DNA polymerase involved in damage-induced mutagenesis and translesion synthesis (TLS). It is not the major replicative DNA polymerase. This chain is Error-prone DNA polymerase, found in Anaeromyxobacter dehalogenans (strain 2CP-1 / ATCC BAA-258).